The primary structure comprises 502 residues: Type II secretion system protein E (502 aa).

Residue 263–270 participates in ATP binding; sequence GPTGSGKT. Positions 396, 399, 429, and 432 each coordinate Zn(2+). A disordered region spans residues 461–480; sequence SSEQEMTRHARTSGPSIRDD.

This sequence belongs to the GSP E family. As to quaternary structure, homodimer. Dimerization is directed by a relatively short domain near the extreme N-terminus and is essential for extracellular protein secretion. May form homooligomers. Interacts with XcpY/GspL. Forms an inner membrane platform subcomplex with XcpS/GspF, XcpY/GspL and XcpZ/GspM. Zn(2+) is required as a cofactor.

Its subcellular location is the cell inner membrane. The enzyme catalyses ATP + H2O + cellular proteinSide 1 = ADP + phosphate + cellular proteinSide 2.. ATPase component of the type II secretion system required for the energy-dependent secretion of extracellular factors such as proteases and toxins from the periplasm. Acts as a molecular motor to provide the energy that is required for assembly of the pseudopilus and the extrusion of substrates generated in the cytoplasm. This is Type II secretion system protein E (xcpR) from Pseudomonas aeruginosa (strain ATCC 15692 / DSM 22644 / CIP 104116 / JCM 14847 / LMG 12228 / 1C / PRS 101 / PAO1).